The chain runs to 182 residues: ATP-dependent protease subunit HslV (182 aa).

The active site involves Thr2. Na(+)-binding residues include Gly157, Cys160, and Thr163.

This sequence belongs to the peptidase T1B family. HslV subfamily. As to quaternary structure, a double ring-shaped homohexamer of HslV is capped on each side by a ring-shaped HslU homohexamer. The assembly of the HslU/HslV complex is dependent on binding of ATP.

It localises to the cytoplasm. The catalysed reaction is ATP-dependent cleavage of peptide bonds with broad specificity.. Its activity is regulated as follows. Allosterically activated by HslU binding. In terms of biological role, protease subunit of a proteasome-like degradation complex believed to be a general protein degrading machinery. The protein is ATP-dependent protease subunit HslV of Vibrio atlanticus (strain LGP32) (Vibrio splendidus (strain Mel32)).